The primary structure comprises 634 residues: Probable potassium transport system protein Kup 1 (634 aa).

The next 12 membrane-spanning stretches (helical) occupy residues 20–40 (FLTL…TSPL), 64–84 (VMSL…VLLI), 110–130 (FAAI…DAII), 148–168 (PVFD…LFVV), 176–196 (VAAW…LGGI), 224–244 (AGLL…ALYA), 256–276 (FAWF…QGAM), 290–310 (FLFP…ATII), 348–368 (IYIP…VFAF), 377–397 (AYGI…YFVM), 405–425 (VATS…FLMA), and 430–450 (IFEG…VMIT).

It belongs to the HAK/KUP transporter (TC 2.A.72) family.

It is found in the cell inner membrane. The enzyme catalyses K(+)(in) + H(+)(in) = K(+)(out) + H(+)(out). In terms of biological role, transport of potassium into the cell. Likely operates as a K(+):H(+) symporter. The chain is Probable potassium transport system protein Kup 1 from Rhodopseudomonas palustris (strain BisB5).